We begin with the raw amino-acid sequence, 645 residues long: ATP-dependent zinc metalloprotease FtsH 1 (645 aa).

At 1–6 (MRSTQK) the chain is on the cytoplasmic side. A helical membrane pass occupies residues 7 to 27 (TLALWFFLIIMAVFLFQAYES). The Periplasmic portion of the chain corresponds to 28–110 (KQQKAIADFN…NYERADNGGF (83 aa)). Residues 111–131 (FQSLLVNWLPLILIVAMFLFI) traverse the membrane as a helical segment. Topologically, residues 132-645 (MRQIQAGGGK…PVGNTGPVTI (514 aa)) are cytoplasmic. 203 to 210 (GSPGTGKT) provides a ligand contact to ATP. His425 contributes to the Zn(2+) binding site. Glu426 is an active-site residue. 2 residues coordinate Zn(2+): His429 and Asp501.

This sequence in the central section; belongs to the AAA ATPase family. In the C-terminal section; belongs to the peptidase M41 family. Homohexamer. Requires Zn(2+) as cofactor.

The protein resides in the cell inner membrane. Functionally, acts as a processive, ATP-dependent zinc metallopeptidase for both cytoplasmic and membrane proteins. Plays a role in the quality control of integral membrane proteins. The sequence is that of ATP-dependent zinc metalloprotease FtsH 1 from Bdellovibrio bacteriovorus (strain ATCC 15356 / DSM 50701 / NCIMB 9529 / HD100).